The sequence spans 171 residues: Shikimate kinase (171 aa).

14-19 (GAGKST) is a binding site for ATP. Residue Ser-18 coordinates Mg(2+). Substrate-binding residues include Asp-36, Arg-60, and Gly-82. Arg-120 contacts ATP. Arg-139 contributes to the substrate binding site. Gln-156 is a binding site for ATP.

This sequence belongs to the shikimate kinase family. In terms of assembly, monomer. Mg(2+) serves as cofactor.

It localises to the cytoplasm. The catalysed reaction is shikimate + ATP = 3-phosphoshikimate + ADP + H(+). It participates in metabolic intermediate biosynthesis; chorismate biosynthesis; chorismate from D-erythrose 4-phosphate and phosphoenolpyruvate: step 5/7. Catalyzes the specific phosphorylation of the 3-hydroxyl group of shikimic acid using ATP as a cosubstrate. The protein is Shikimate kinase of Shewanella oneidensis (strain ATCC 700550 / JCM 31522 / CIP 106686 / LMG 19005 / NCIMB 14063 / MR-1).